A 350-amino-acid polypeptide reads, in one-letter code: Methylthioribose-1-phosphate isomerase (350 aa).

The active-site Proton donor is the Asp-241.

Belongs to the eIF-2B alpha/beta/delta subunits family. MtnA subfamily.

Its subcellular location is the cytoplasm. The protein resides in the nucleus. It carries out the reaction 5-(methylsulfanyl)-alpha-D-ribose 1-phosphate = 5-(methylsulfanyl)-D-ribulose 1-phosphate. Its pathway is amino-acid biosynthesis; L-methionine biosynthesis via salvage pathway; L-methionine from S-methyl-5-thio-alpha-D-ribose 1-phosphate: step 1/6. Functionally, catalyzes the interconversion of methylthioribose-1-phosphate (MTR-1-P) into methylthioribulose-1-phosphate (MTRu-1-P). The sequence is that of Methylthioribose-1-phosphate isomerase from Nematostella vectensis (Starlet sea anemone).